A 752-amino-acid chain; its full sequence is MARSRSRSPRWKQRSLSPQSRNFEYHEERHFHGHYDPEYRHDQQRPFTWRMDDEKHGQNKPRIPPRVNSYHRSYVNRSPSPNVKPVEKFDTYKPHQEYFPGRGDDDRRSQYMPTYTESAATYMEHERDCYIPTVQGRYTPDDHRGRGRGSGRGEKPPQMSLGKPPKMSLGKPPQMSLADSLRFKEKWHEDELRHQRVQEESYPQSPRRGSEDFGTRNPFQKRYPEDHDFRKYGYTSKRPTDAARYENRDPARIPKWKPEHSFLPFQEKKEEWSFGAQGHRYTEREYPERSSTTRVSYDYRHKHHKLSESEQDFPDGRFHKHLKEEDRKYSSIKAPANRELDCFSTTRGREIENEQINGPFYLYNKNSVSYNHTNIKDADLEPCNDKWKKKISKEDCRKENASFSKQFDTSPKPEEKCYSLIKKKPLSVKVDRNKTDTFRSTSRYSAERQISHDLVAIGKTSDNFHPVFQHLDSTQNPENKPTEEFAQEIITLIHKVKADSFVTPDITLNERFSRIKNRQDADFNQTKSNSDPEFHRRIDMSLDDFQNKYTMVYEPDKTLVKVIEPNDLRHDIERRRKERLQNEDENIFHMASPTERNHQSPSFSKVKTIRADGFQKPPHFIKSNFRKFIQKPYINYTMQRKDAIDQKIFRVEENHQNRRGSKGSFKNFLGGRFQPHYKSHLVQKSMYIQAKYQRLRFAGPRGFITNKFRNRFLRKKKEYPVLPRTNNLELLQVEPTLYEDLTEHLIFVRNWN.

The segment covering 1–13 (MARSRSRSPRWKQ) has biased composition (basic residues). Disordered regions lie at residues 1–114 (MARS…YMPT), 132–177 (PTVQ…QMSL), and 190–252 (DELR…DPAR). 2 positions are modified to phosphoserine: Ser15 and Ser17. Residues 23–57 (FEYHEERHFHGHYDPEYRHDQQRPFTWRMDDEKHG) show a composition bias toward basic and acidic residues. Residues Ser78 and Ser80 each carry the phosphoserine modification. Residues 85-109 (PVEKFDTYKPHQEYFPGRGDDDRRS) are compositionally biased toward basic and acidic residues. The span at 190-199 (DELRHQRVQE) shows a compositional bias: basic and acidic residues. The residue at position 205 (Ser205) is a Phosphoserine. Composition is skewed to basic and acidic residues over residues 222–231 (RYPEDHDFRK) and 238–252 (RPTD…DPAR). A Glycyl lysine isopeptide (Lys-Gly) (interchain with G-Cter in SUMO2) cross-link involves residue Lys416. Position 592 is a phosphoserine (Ser592).

This sequence belongs to the BCLAF1/THRAP3 family.

It is found in the mitochondrion. The chain is BCLAF1 and THRAP3 family member 3 from Mus musculus (Mouse).